Here is a 163-residue protein sequence, read N- to C-terminus: Protein LOL5 (163 aa).

Polar residues-rich tracts occupy residues 1–25 (MSQLPLASQATTTDLVSTTAMQPQS) and 33–44 (LQPQHPPSSTAH). The segment at 1–51 (MSQLPLASQATTTDLVSTTAMQPQSEGIVDESLQPQHPPSSTAHDSPCLQD) is disordered. Putative zinc finger regions lie at residues 70-100 (QMVCGSCRILLAYFRGAGYVHCTCCQTMNYV) and 108-138 (KVHCGHCATLLMYPFGAPAVKCSLCLFVTEI).

The protein localises to the nucleus. In terms of biological role, involved in plant growth and disease resistance. This is Protein LOL5 (LOL5) from Oryza sativa subsp. japonica (Rice).